Reading from the N-terminus, the 107-residue chain is Putative septation protein SpoVG (107 aa).

A disordered region spans residues 82–107; sequence ETDEVIPDKNAQPSSDSEDNGSEEEA. Residues 97-107 show a composition bias toward acidic residues; the sequence is DSEDNGSEEEA.

Belongs to the SpoVG family.

Its function is as follows. Could be involved in septation. The protein is Putative septation protein SpoVG of Staphylococcus carnosus (strain TM300).